The following is a 530-amino-acid chain: GATA zinc finger domain-containing protein 4 (530 aa).

Disordered stretches follow at residues methionine 1–asparagine 27 and serine 212–asparagine 386. 3 stretches are compositionally biased toward low complexity: residues asparagine 7–asparagine 17, serine 216–asparagine 290, and asparagine 299–asparagine 386. Residues cysteine 494–cysteine 518 form a GATA-type zinc finger.

In Dictyostelium discoideum (Social amoeba), this protein is GATA zinc finger domain-containing protein 4 (gtaD).